A 185-amino-acid chain; its full sequence is Ribosome-recycling factor (185 aa).

This sequence belongs to the RRF family.

It is found in the cytoplasm. Its function is as follows. Responsible for the release of ribosomes from messenger RNA at the termination of protein biosynthesis. May increase the efficiency of translation by recycling ribosomes from one round of translation to another. This Zymomonas mobilis subsp. mobilis (strain ATCC 31821 / ZM4 / CP4) protein is Ribosome-recycling factor.